The chain runs to 334 residues: Galactosylgalactosylxylosylprotein 3-beta-glucuronosyltransferase 1 (334 aa).

Topologically, residues 1-6 (MPKRRD) are cytoplasmic. The essential for transport from endoplasmic reticulum to Golgi apparatus and interaction with SAR1A stretch occupies residues 3-5 (KRR). A helical; Signal-anchor for type II membrane protein transmembrane segment spans residues 7–27 (ILAIVLIVLPWTLLITVWHQS). Topologically, residues 28–334 (SLAPLLAVHK…KGFTDPSVEI (307 aa)) are lumenal. UDP-alpha-D-glucuronate is bound at residue 91–93 (PTY). Residues T103 and T108 each carry the phosphothreonine modification. D122 provides a ligand contact to UDP-alpha-D-glucuronate. Residue N140 is glycosylated (N-linked (GlcNAc...) asparagine). UDP-alpha-D-glucuronate contacts are provided by R165 and R170. N-linked (GlcNAc...) asparagine glycosylation occurs at N184. 195-197 (DDD) contributes to the UDP-alpha-D-glucuronate binding site. Position 197 (D197) interacts with Mn(2+). Residues 245–254 (FDPHRPFAID) are interaction with galactose moiety of substrate glycoprotein. The active-site Proton donor/acceptor is E284. Residue N303 is glycosylated (N-linked (GlcNAc...) asparagine). 311–313 (HTR) serves as a coordination point for UDP-alpha-D-glucuronate.

Belongs to the glycosyltransferase 43 family. In terms of assembly, homodimer. Interacts with SAR1A. It depends on Mn(2+) as a cofactor. In terms of processing, the soluble form derives from the membrane form by proteolytic processing.

Its subcellular location is the golgi apparatus membrane. The protein localises to the secreted. It is found in the endoplasmic reticulum membrane. The catalysed reaction is 3-O-(beta-D-galactosyl-(1-&gt;3)-beta-D-galactosyl-(1-&gt;4)-beta-D-xylosyl)-L-seryl-[protein] + UDP-alpha-D-glucuronate = 3-O-(beta-D-GlcA-(1-&gt;3)-beta-D-Gal-(1-&gt;3)-beta-D-Gal-(1-&gt;4)-beta-D-Xyl)-L-seryl-[protein] + UDP + H(+). It functions in the pathway protein modification; protein glycosylation. Involved in the biosynthesis of L2/HNK-1 carbohydrate epitope on glycoproteins. Can also play a role in glycosaminoglycan biosynthesis. Substrates include asialo-orosomucoid (ASOR), asialo-fetuin, and asialo-neural cell adhesion molecule. Requires sphingomyelin for activity: stearoyl-sphingomyelin was the most effective, followed by palmitoyl-sphingomyelin and lignoceroyl-sphingomyelin. Activity was demonstrated only for sphingomyelin with a saturated fatty acid and not for that with an unsaturated fatty acid, regardless of the length of the acyl group. The polypeptide is Galactosylgalactosylxylosylprotein 3-beta-glucuronosyltransferase 1 (Mus musculus (Mouse)).